Reading from the N-terminus, the 128-residue chain is Azurin (128 aa).

Positions 1 to 128 (AECKVDVDST…SMMKGAVVLK (128 aa)) constitute a Plastocyanin-like domain. An intrachain disulfide couples C3 to C26. Positions 46, 112, 117, and 121 each coordinate Cu cation.

It localises to the periplasm. Its function is as follows. Transfers electrons from cytochrome c551 to cytochrome oxidase. This is Azurin from Pseudomonas chlororaphis (Pseudomonas aureofaciens).